A 588-amino-acid polypeptide reads, in one-letter code: Adenine deaminase (588 aa).

It belongs to the metallo-dependent hydrolases superfamily. Adenine deaminase family. Homodimer. It depends on Mn(2+) as a cofactor.

The catalysed reaction is adenine + H2O + H(+) = hypoxanthine + NH4(+). The chain is Adenine deaminase from Escherichia coli O9:H4 (strain HS).